The sequence spans 35 residues: Photosystem II reaction center protein T (35 aa).

A helical transmembrane segment spans residues 3–23 (ALVYTFLLVSTLGIIFFAIFF).

This sequence belongs to the PsbT family. In terms of assembly, PSII is composed of 1 copy each of membrane proteins PsbA, PsbB, PsbC, PsbD, PsbE, PsbF, PsbH, PsbI, PsbJ, PsbK, PsbL, PsbM, PsbT, PsbY, PsbZ, Psb30/Ycf12, at least 3 peripheral proteins of the oxygen-evolving complex and a large number of cofactors. It forms dimeric complexes.

The protein resides in the plastid. It is found in the chloroplast thylakoid membrane. Functionally, found at the monomer-monomer interface of the photosystem II (PS II) dimer, plays a role in assembly and dimerization of PSII. PSII is a light-driven water plastoquinone oxidoreductase, using light energy to abstract electrons from H(2)O, generating a proton gradient subsequently used for ATP formation. The chain is Photosystem II reaction center protein T from Gunnera chilensis (Chilean rhubarb).